A 748-amino-acid polypeptide reads, in one-letter code: CCR4-NOT transcription complex subunit 10-B (748 aa).

The span at 1-16 shows a compositional bias: basic and acidic residues; sequence MAADKAGEQGAEKHEG. Disordered stretches follow at residues 1–25, 483–524, and 605–634; these read MAAD…GISD, KQEN…PPSS, and VSLG…KQIP. Polar residues-rich tracts occupy residues 487–509 and 605–615; these read GSKA…VCSN and VSLGVSSNEQE.

Belongs to the CNOT10 family. As to quaternary structure, component of the CCR4-NOT complex. cnot10 and cnot11 form a subcomplex docked to the cnot1 scaffold.

It is found in the cytoplasm. Its subcellular location is the nucleus. Functionally, component of the CCR4-NOT complex which is one of the major cellular mRNA deadenylases and is linked to various cellular processes including bulk mRNA degradation, miRNA-mediated repression, translational repression during translational initiation and general transcription regulation. Additional complex functions may be a consequence of its influence on mRNA expression. Is not required for association of CNOT7 to the CCR4-NOT complex. The polypeptide is CCR4-NOT transcription complex subunit 10-B (cnot10-b) (Xenopus laevis (African clawed frog)).